A 212-amino-acid polypeptide reads, in one-letter code: ATP phosphoribosyltransferase (212 aa).

It belongs to the ATP phosphoribosyltransferase family. Short subfamily. Heteromultimer composed of HisG and HisZ subunits.

It localises to the cytoplasm. The enzyme catalyses 1-(5-phospho-beta-D-ribosyl)-ATP + diphosphate = 5-phospho-alpha-D-ribose 1-diphosphate + ATP. The protein operates within amino-acid biosynthesis; L-histidine biosynthesis; L-histidine from 5-phospho-alpha-D-ribose 1-diphosphate: step 1/9. In terms of biological role, catalyzes the condensation of ATP and 5-phosphoribose 1-diphosphate to form N'-(5'-phosphoribosyl)-ATP (PR-ATP). Has a crucial role in the pathway because the rate of histidine biosynthesis seems to be controlled primarily by regulation of HisG enzymatic activity. The chain is ATP phosphoribosyltransferase from Clostridium botulinum (strain Langeland / NCTC 10281 / Type F).